The primary structure comprises 469 residues: Glutamate--tRNA ligase (469 aa).

The 'HIGH' region motif lies at 9 to 19 (PSPTGFLHVGG). Zn(2+) contacts are provided by cysteine 98, cysteine 100, cysteine 125, and aspartate 127. A 'KMSKS' region motif is present at residues 236–240 (KLSKR). An ATP-binding site is contributed by lysine 239.

It belongs to the class-I aminoacyl-tRNA synthetase family. Glutamate--tRNA ligase type 1 subfamily. Monomer. Zn(2+) is required as a cofactor.

Its subcellular location is the cytoplasm. The enzyme catalyses tRNA(Glu) + L-glutamate + ATP = L-glutamyl-tRNA(Glu) + AMP + diphosphate. In terms of biological role, catalyzes the attachment of glutamate to tRNA(Glu) in a two-step reaction: glutamate is first activated by ATP to form Glu-AMP and then transferred to the acceptor end of tRNA(Glu). The polypeptide is Glutamate--tRNA ligase (Shewanella sp. (strain ANA-3)).